The following is a 172-amino-acid chain: Keratin, high-sulfur matrix protein, B2A (172 aa).

An N-acetylalanine modification is found at Ala2. 5 repeats span residues 27–36 (PTCCQTSCCQ), 37–46 (PTSIQTSCCQ), 47–56 (PISIQTSCCQ), 57–66 (PTSIQTSCCQ), and 67–76 (PTCLQTSGCE).

In terms of biological role, the keratin products of mammalian epidermal derivatives such as wool and hair consist of microfibrils embedded in a rigid matrix of other proteins. The matrix proteins include the high-sulfur and high-tyrosine keratins, having molecular weights of 6-20 kDa, whereas the microfibrils contain the larger, low-sulfur keratins (40-56 kDa). This is Keratin, high-sulfur matrix protein, B2A from Ovis aries (Sheep).